The chain runs to 702 residues: Ribosomal RNA large subunit methyltransferase K/L (702 aa).

The THUMP domain maps to L43–L154.

Belongs to the methyltransferase superfamily. RlmKL family.

It localises to the cytoplasm. The catalysed reaction is guanosine(2445) in 23S rRNA + S-adenosyl-L-methionine = N(2)-methylguanosine(2445) in 23S rRNA + S-adenosyl-L-homocysteine + H(+). The enzyme catalyses guanosine(2069) in 23S rRNA + S-adenosyl-L-methionine = N(2)-methylguanosine(2069) in 23S rRNA + S-adenosyl-L-homocysteine + H(+). Its function is as follows. Specifically methylates the guanine in position 2445 (m2G2445) and the guanine in position 2069 (m7G2069) of 23S rRNA. The polypeptide is Ribosomal RNA large subunit methyltransferase K/L (Escherichia coli O6:H1 (strain CFT073 / ATCC 700928 / UPEC)).